The chain runs to 100 residues: Small ribosomal subunit protein uS14c (100 aa).

This sequence belongs to the universal ribosomal protein uS14 family. As to quaternary structure, part of the 30S ribosomal subunit.

The protein resides in the plastid. It is found in the chloroplast. Binds 16S rRNA, required for the assembly of 30S particles. This chain is Small ribosomal subunit protein uS14c, found in Pelargonium hortorum (Common geranium).